A 217-amino-acid polypeptide reads, in one-letter code: Adenylate kinase (217 aa).

Residue 10–15 (GAGKGT) participates in ATP binding. Residues 30 to 59 (STGDMFRAAMKEGTPLGLQAKQYMDRGDLV) are NMP. Residues threonine 31, arginine 36, 57–59 (DLV), 85–88 (GFPR), and glutamine 92 contribute to the AMP site. Residues 126–163 (GRRICRNCGATYHLIFHPPAKPGVCDKCGGELYQRADD) are LID. Arginine 127 contacts ATP. Positions 130 and 133 each coordinate Zn(2+). Residue 136–137 (TY) coordinates ATP. Zn(2+)-binding residues include cysteine 150 and cysteine 153. AMP contacts are provided by arginine 160 and arginine 171. Glutamine 199 contributes to the ATP binding site.

This sequence belongs to the adenylate kinase family. As to quaternary structure, monomer.

Its subcellular location is the cytoplasm. It catalyses the reaction AMP + ATP = 2 ADP. Its pathway is purine metabolism; AMP biosynthesis via salvage pathway; AMP from ADP: step 1/1. Catalyzes the reversible transfer of the terminal phosphate group between ATP and AMP. Plays an important role in cellular energy homeostasis and in adenine nucleotide metabolism. This Geobacillus stearothermophilus (Bacillus stearothermophilus) protein is Adenylate kinase.